A 348-amino-acid polypeptide reads, in one-letter code: MNGTEGLNFYVPFSNKTGVVRSPFEYPQYYLAEPWQFSVLAAYMFLLIVLGFPINFLTLYVTVQHKKLRTPLNYILLNLAVANLFMVFGGFTTTLYTSLHAYFVFGPTGCNLEGFFATLGGEIALWSLVVLAIERYVVVCKPMSNFRFGENHAIMGLALTWIMAMACAAAPLVGWSRYIPEGMQCSCGIDYYTSRQEVNNESFVIYMFVVHFTIPLVIIFFCYGQLVFTVKEAAAQQQESATTQKAEKEVTRMVIIMVVAFLICWVPYASVAFYIFTHQGSDFGPIFMTIPSFFAKSSSIYNPVIYIMMNKQFRNCMLTTLCCGRNPLGDDEASTTASKTETSQVAPA.

Position 1 is an N-acetylmethionine (M1). Topologically, residues 1–36 (MNGTEGLNFYVPFSNKTGVVRSPFEYPQYYLAEPWQ) are extracellular. Residues N2 and N15 are each glycosylated (N-linked (GlcNAc...) asparagine). The helical transmembrane segment at 37–61 (FSVLAAYMFLLIVLGFPINFLTLYV) threads the bilayer. Residues 62 to 73 (TVQHKKLRTPLN) are Cytoplasmic-facing. Residues 74–99 (YILLNLAVANLFMVFGGFTTTLYTSL) traverse the membrane as a helical segment. Over 100 to 111 (HAYFVFGPTGCN) the chain is Extracellular. C110 and C187 are disulfide-bonded. The chain crosses the membrane as a helical span at residues 112–133 (LEGFFATLGGEIALWSLVVLAI). Positions 134 to 136 (ERY) match the 'Ionic lock' involved in activated form stabilization motif. The Cytoplasmic segment spans residues 134–152 (ERYVVVCKPMSNFRFGENH). Residues 153–173 (AIMGLALTWIMAMACAAAPLV) traverse the membrane as a helical segment. The Extracellular segment spans residues 174-202 (GWSRYIPEGMQCSCGIDYYTSRQEVNNES). E201 contacts Zn(2+). Residues 203–227 (FVIYMFVVHFTIPLVIIFFCYGQLV) traverse the membrane as a helical segment. Topologically, residues 228-252 (FTVKEAAAQQQESATTQKAEKEVTR) are cytoplasmic. A helical membrane pass occupies residues 253 to 274 (MVIIMVVAFLICWVPYASVAFY). Topologically, residues 275 to 286 (IFTHQGSDFGPI) are extracellular. Q279 provides a ligand contact to Zn(2+). The helical transmembrane segment at 287–306 (FMTIPSFFAKSSSIYNPVIY) threads the bilayer. An N6-(retinylidene)lysine modification is found at K296. Topologically, residues 307 to 348 (IMMNKQFRNCMLTTLCCGRNPLGDDEASTTASKTETSQVAPA) are cytoplasmic. 2 S-palmitoyl cysteine lipidation sites follow: C322 and C323. S334 is modified (phosphoserine). Phosphothreonine is present on residues T335 and T336. Position 338 is a phosphoserine (S338). Phosphothreonine occurs at positions 340 and 342. A Phosphoserine modification is found at S343.

This sequence belongs to the G-protein coupled receptor 1 family. Opsin subfamily. In terms of assembly, homodimer. May form a complex composed of RHO, GRK1 and RCVRN in a Ca(2+)-dependent manner; RCVRN prevents the interaction between GRK1 and RHO. Interacts with GRK1. Interacts (phosphorylated form) with SAG. Interacts with GNAT1. Interacts with GNAT3. SAG and G-proteins compete for a common binding site. Interacts with PRCD; the interaction promotes PRCD stability. Forms a complex with ASAP1 and ARF4. Forms a complex with ASAP1, RAB11A, Rabin8/RAB3IP, ARF4 and RAB11FIP3; the complex regulates Golgi-to-cilia rhodopsin/RHO transport in photoreceptors. Contains one covalently linked retinal chromophore. Upon light absorption, the covalently bound 11-cis-retinal is converted to all-trans-retinal. After hydrolysis of the Schiff base and release of the covalently bound all-trans-retinal, active rhodopsin is regenerated by binding of a fresh molecule of 11-cis-retinal.

It is found in the membrane. It localises to the cell projection. The protein resides in the cilium. The protein localises to the photoreceptor outer segment. Its function is as follows. Photoreceptor required for image-forming vision at low light intensity. Light-induced isomerization of 11-cis to all-trans retinal triggers a conformational change that activates signaling via G-proteins. Signaling mediates the activation of phospholipase C. Subsequent receptor phosphorylation mediates displacement of the bound G-protein alpha subunit by arrestin and terminates signaling. This chain is Rhodopsin (RHO), found in Tursiops truncatus (Atlantic bottle-nosed dolphin).